A 155-amino-acid polypeptide reads, in one-letter code: Sec-independent protein translocase protein TatB (155 aa).

A helical membrane pass occupies residues 1–21 (MFGMGFFEILVVLVVAIIFLG). Residues 109-155 (SLENNAPPKHLNKEVSNREVFHNEPPKEIELIANNNTTKHDKEKEHV) form a disordered region. Basic and acidic residues-rich tracts occupy residues 119-138 (LNKE…KEIE) and 146-155 (TKHDKEKEHV).

This sequence belongs to the TatB family. As to quaternary structure, the Tat system comprises two distinct complexes: a TatABC complex, containing multiple copies of TatA, TatB and TatC subunits, and a separate TatA complex, containing only TatA subunits. Substrates initially bind to the TatABC complex, which probably triggers association of the separate TatA complex to form the active translocon.

Its subcellular location is the cell inner membrane. Functionally, part of the twin-arginine translocation (Tat) system that transports large folded proteins containing a characteristic twin-arginine motif in their signal peptide across membranes. Together with TatC, TatB is part of a receptor directly interacting with Tat signal peptides. TatB may form an oligomeric binding site that transiently accommodates folded Tat precursor proteins before their translocation. The chain is Sec-independent protein translocase protein TatB from Helicobacter acinonychis (strain Sheeba).